The primary structure comprises 89 residues: Small ribosomal subunit protein uS15 (89 aa).

The protein belongs to the universal ribosomal protein uS15 family. In terms of assembly, part of the 30S ribosomal subunit. Forms a bridge to the 50S subunit in the 70S ribosome, contacting the 23S rRNA.

In terms of biological role, one of the primary rRNA binding proteins, it binds directly to 16S rRNA where it helps nucleate assembly of the platform of the 30S subunit by binding and bridging several RNA helices of the 16S rRNA. Its function is as follows. Forms an intersubunit bridge (bridge B4) with the 23S rRNA of the 50S subunit in the ribosome. This is Small ribosomal subunit protein uS15 from Streptococcus gordonii (strain Challis / ATCC 35105 / BCRC 15272 / CH1 / DL1 / V288).